Reading from the N-terminus, the 119-residue chain is Large ribosomal subunit protein uL18 (119 aa).

Belongs to the universal ribosomal protein uL18 family. Part of the 50S ribosomal subunit; part of the 5S rRNA/L5/L18/L25 subcomplex. Contacts the 5S and 23S rRNAs.

In terms of biological role, this is one of the proteins that bind and probably mediate the attachment of the 5S RNA into the large ribosomal subunit, where it forms part of the central protuberance. This is Large ribosomal subunit protein uL18 from Lactobacillus johnsonii (strain CNCM I-12250 / La1 / NCC 533).